The following is a 294-amino-acid chain: 4-hydroxy-tetrahydrodipicolinate synthase (294 aa).

Pyruvate is bound at residue T47. Y135 serves as the catalytic Proton donor/acceptor. The active-site Schiff-base intermediate with substrate is K163. V205 lines the pyruvate pocket.

This sequence belongs to the DapA family. Homotetramer; dimer of dimers.

The protein localises to the cytoplasm. The catalysed reaction is L-aspartate 4-semialdehyde + pyruvate = (2S,4S)-4-hydroxy-2,3,4,5-tetrahydrodipicolinate + H2O + H(+). Its pathway is amino-acid biosynthesis; L-lysine biosynthesis via DAP pathway; (S)-tetrahydrodipicolinate from L-aspartate: step 3/4. Its function is as follows. Catalyzes the condensation of (S)-aspartate-beta-semialdehyde [(S)-ASA] and pyruvate to 4-hydroxy-tetrahydrodipicolinate (HTPA). This is 4-hydroxy-tetrahydrodipicolinate synthase from Rickettsia canadensis (strain McKiel).